Here is a 156-residue protein sequence, read N- to C-terminus: Small ribosomal subunit protein uS7 (156 aa).

This sequence belongs to the universal ribosomal protein uS7 family. As to quaternary structure, part of the 30S ribosomal subunit. Contacts proteins S9 and S11.

Functionally, one of the primary rRNA binding proteins, it binds directly to 16S rRNA where it nucleates assembly of the head domain of the 30S subunit. Is located at the subunit interface close to the decoding center, probably blocks exit of the E-site tRNA. The protein is Small ribosomal subunit protein uS7 of Clavibacter sepedonicus (Clavibacter michiganensis subsp. sepedonicus).